Reading from the N-terminus, the 432-residue chain is Adenylosuccinate synthetase (432 aa).

GTP contacts are provided by residues 13–19 and 41–43; these read GDEGKGK and GHT. Aspartate 14 functions as the Proton acceptor in the catalytic mechanism. Aspartate 14 and glycine 41 together coordinate Mg(2+). IMP is bound by residues 14-17, 39-42, threonine 130, arginine 144, glutamine 225, threonine 240, and arginine 304; these read DEGK and NAGH. Residue histidine 42 is the Proton donor of the active site. 300–306 contacts substrate; sequence ATTGRKR. GTP contacts are provided by residues arginine 306, 332–334, and 415–417; these read KLD and STG.

The protein belongs to the adenylosuccinate synthetase family. As to quaternary structure, homodimer. It depends on Mg(2+) as a cofactor.

The protein resides in the cytoplasm. The catalysed reaction is IMP + L-aspartate + GTP = N(6)-(1,2-dicarboxyethyl)-AMP + GDP + phosphate + 2 H(+). The protein operates within purine metabolism; AMP biosynthesis via de novo pathway; AMP from IMP: step 1/2. Functionally, plays an important role in the de novo pathway of purine nucleotide biosynthesis. Catalyzes the first committed step in the biosynthesis of AMP from IMP. This Photobacterium profundum (strain SS9) protein is Adenylosuccinate synthetase.